Reading from the N-terminus, the 327-residue chain is Methionine import ATP-binding protein MetN (327 aa).

The region spanning 3–239 (VELKNIEKIY…PKHAVTKELI (237 aa)) is the ABC transporter domain. An ATP-binding site is contributed by 36–43 (GYSGAGKS).

It belongs to the ABC transporter superfamily. Methionine importer (TC 3.A.1.24) family. The complex is composed of two ATP-binding proteins (MetN), two transmembrane proteins (MetI) and a solute-binding protein (MetQ).

It localises to the cell inner membrane. It carries out the reaction L-methionine(out) + ATP + H2O = L-methionine(in) + ADP + phosphate + H(+). The catalysed reaction is D-methionine(out) + ATP + H2O = D-methionine(in) + ADP + phosphate + H(+). Part of the ABC transporter complex MetNIQ involved in methionine import. Responsible for energy coupling to the transport system. The protein is Methionine import ATP-binding protein MetN of Helicobacter acinonychis (strain Sheeba).